Reading from the N-terminus, the 96-residue chain is Protein RnfH (96 aa).

It belongs to the UPF0125 (RnfH) family.

This chain is Protein RnfH, found in Escherichia coli O17:K52:H18 (strain UMN026 / ExPEC).